Consider the following 156-residue polypeptide: Eosinophil cationic-type ribonuclease 3 (156 aa).

The signal sequence occupies residues 1 to 25 (MGPKLLESRLCLLLLLRLVLMLASC). His38 serves as the catalytic Proton acceptor. Asn41 is a glycosylation site (N-linked (GlcNAc...) asparagine). 4 cysteine pairs are disulfide-bonded: Cys47–Cys106, Cys61–Cys119, Cys79–Cys134, and Cys86–Cys94. 62-66 (KGLNT) contacts substrate. Asn89, Asn96, and Asn107 each carry an N-linked (GlcNAc...) asparagine glycan. The active-site Proton donor is His151.

This sequence belongs to the pancreatic ribonuclease family.

The polypeptide is Eosinophil cationic-type ribonuclease 3 (Ear3) (Mus musculus (Mouse)).